A 418-amino-acid chain; its full sequence is Nucleoredoxin (418 aa).

One can recognise a Thioredoxin domain in the interval 109-309 (KYKVTSIPSL…ESNAVQLHEG (201 aa)).

This sequence belongs to the nucleoredoxin family.

Its subcellular location is the cytoplasm. The protein resides in the cytosol. It localises to the nucleus. The catalysed reaction is [protein]-dithiol + NAD(+) = [protein]-disulfide + NADH + H(+). It carries out the reaction [protein]-dithiol + NADP(+) = [protein]-disulfide + NADPH + H(+). Functionally, functions as a redox-dependent negative regulator of the Wnt signaling pathway. This Danio rerio (Zebrafish) protein is Nucleoredoxin (nxn).